We begin with the raw amino-acid sequence, 346 residues long: MLTDRELLILEEIVREYTENGQPIGSKTLMNNLPVKVSSATIRNDMAKLEEMGLIEKMHSSSGRIPSLMGYRYYVDHLLSPKKLNQSEAQQIQKGLGMHFREVDDIVRTSAEMLSNLTHYTALTLKPDQKDATLDGFRMVPLGGNQVMLILVSSNGDVTSQQFSIPRGMNSETVERVLRIMNDRLIGETLDQVYYHLKTDIPKIVEHYLHSNDGIIDIFENVVAQSSQDRYFIGGKLNILNFSKNVDVSSIRGLLTLFNENDQLDGLLGNNQSDLDVKIGDELSNALLKDFSLITATYDVGSRGKGLIAILGPTSMQYSKTLGLLDTFRDQLSNRMLEYYKHLDDS.

It belongs to the HrcA family.

In terms of biological role, negative regulator of class I heat shock genes (grpE-dnaK-dnaJ and groELS operons). Prevents heat-shock induction of these operons. This is Heat-inducible transcription repressor HrcA from Pediococcus pentosaceus (strain ATCC 25745 / CCUG 21536 / LMG 10740 / 183-1w).